The chain runs to 1071 residues: Myosin IF heavy chain (1071 aa).

Residues 40–736 form the Myosin motor domain; the sequence is VGLTDMCFLE…TLFHFEELRQ (697 aa). 134–141 is a binding site for ATP; sequence GESGSGKT. Positions 610-632 are actin-binding; that stretch reads INDLIGKLNTCQPHYIRCIKSNE. An IQ domain is found at 739-768; the sequence is LPSIVITIQRVWRGYKVRKWYKQELQRLRE. The 200-residue stretch at 870 to 1069 folds into the TH1 domain; that stretch reads SRKKEWDCRR…KGNTAIVYYN (200 aa).

The protein belongs to the TRAFAC class myosin-kinesin ATPase superfamily. Myosin family. As to quaternary structure, myosin I heavy chain is single-headed. Dimer of a heavy and a light chain. Inability to self-assemble into filaments.

Its function is as follows. Myosin is a protein that binds to actin and has ATPase activity that is activated by actin. The chain is Myosin IF heavy chain (myoF) from Dictyostelium discoideum (Social amoeba).